A 152-amino-acid polypeptide reads, in one-letter code: MFRGATLVNLDSKGRLSVPTRYREQLLENAVGQMVCTIDIHHPCLLLYPLPEWEIIEQKLSRLSSMNPVERRVQRLLLGHASECQMDGAGRLLIAPVLRQHAGLTKEVMLVGQFNKFELWDETTWHQQVKEDIDAEQLATGDLSERLQDLSL.

2 consecutive SpoVT-AbrB domains span residues 5-52 (ATLV…PLPE) and 81-124 (ASEC…DETT).

This sequence belongs to the MraZ family. Forms oligomers.

The protein resides in the cytoplasm. The protein localises to the nucleoid. Its function is as follows. Negatively regulates its own expression and that of the subsequent genes in the proximal part of the division and cell wall (dcw) gene cluster. Acts by binding directly to DNA. May also regulate the expression of genes outside the dcw cluster. This Shigella sonnei (strain Ss046) protein is Transcriptional regulator MraZ.